A 568-amino-acid polypeptide reads, in one-letter code: Probable inactive 1-aminocyclopropane-1-carboxylate synthase-like protein 2 (568 aa).

The segment at 1–21 (MSHRSDTLPVPSGQRRGRVPR) is disordered. The residue at position 395 (lysine 395) is an N6-(pyridoxal phosphate)lysine.

The protein belongs to the class-I pyridoxal-phosphate-dependent aminotransferase family.

This chain is Probable inactive 1-aminocyclopropane-1-carboxylate synthase-like protein 2 (ACCSL), found in Homo sapiens (Human).